A 354-amino-acid polypeptide reads, in one-letter code: NADH-quinone oxidoreductase subunit H (354 aa).

A run of 8 helical transmembrane segments spans residues 22-42, 91-111, 124-144, 162-182, 203-223, 250-270, 291-311, and 326-346; these read ILIR…YLIL, YLVA…VIPF, LLYV…AGWA, VSYE…SGSL, LLSW…ISGV, GMTF…ISTM, IPGF…FIWI, and LGWK…AIWI.

Belongs to the complex I subunit 1 family. NDH-1 is composed of 14 different subunits. Subunits NuoA, H, J, K, L, M, N constitute the membrane sector of the complex.

The protein localises to the cell inner membrane. The enzyme catalyses a quinone + NADH + 5 H(+)(in) = a quinol + NAD(+) + 4 H(+)(out). In terms of biological role, NDH-1 shuttles electrons from NADH, via FMN and iron-sulfur (Fe-S) centers, to quinones in the respiratory chain. The immediate electron acceptor for the enzyme in this species is believed to be ubiquinone. Couples the redox reaction to proton translocation (for every two electrons transferred, four hydrogen ions are translocated across the cytoplasmic membrane), and thus conserves the redox energy in a proton gradient. This subunit may bind ubiquinone. This is NADH-quinone oxidoreductase subunit H from Cupriavidus metallidurans (strain ATCC 43123 / DSM 2839 / NBRC 102507 / CH34) (Ralstonia metallidurans).